The following is a 692-amino-acid chain: uncharacterized protein (692 aa).

The N-terminal 39 residues, 1-39, are a transit peptide targeting the chloroplast; sequence MLRLPSSMPIVSFPANPNLLINPQPSWPSRRGNSAVVVS. A Protein kinase domain is found at 189-523; sequence EISPEPVAAA…RLESLLSESL (335 aa). Residues 195-203 and lysine 218 each bind ATP; that span reads VAAASLGQV. Residue aspartate 343 is the Proton acceptor of the active site.

Belongs to the protein kinase superfamily. ADCK protein kinase family.

The protein localises to the plastid. It localises to the chloroplast. The protein resides in the plastoglobule. This is an uncharacterized protein from Arabidopsis thaliana (Mouse-ear cress).